The following is a 147-amino-acid chain: Hemoglobin subunit beta-1 (147 aa).

Positions 3-147 (HWTDFERSTI…VVFSLGKQYH (145 aa)) constitute a Globin domain. Heme b is bound by residues H64 and H93.

The protein belongs to the globin family. Hb1 is a heterotetramer of two alpha-1 chains and two beta-1 chains. Red blood cells.

Involved in oxygen transport from gills to the various peripheral tissues. This is Hemoglobin subunit beta-1 from Liparis tunicatus (Kelp snailfish).